The following is a 576-amino-acid chain: Lipoprotein LpqB (576 aa).

A signal peptide spans 1–16; the sequence is MRRVTRTIAAAGAAIA. Cys-17 carries N-palmitoyl cysteine lipidation. Cys-17 carries the S-diacylglycerol cysteine lipid modification.

This sequence belongs to the LpqB lipoprotein family.

Its subcellular location is the cell membrane. The polypeptide is Lipoprotein LpqB (Bifidobacterium longum (strain NCC 2705)).